A 228-amino-acid polypeptide reads, in one-letter code: Small ribosomal subunit protein uS7m (228 aa).

A mitochondrion-targeting transit peptide spans 1 to 33 (MAASVRHLLKPWTPSLCLMRWSRYNPYYLDPEP).

The protein belongs to the universal ribosomal protein uS7 family. In terms of assembly, component of the mitochondrial ribosome small subunit (28S) which comprises a 12S rRNA and about 30 distinct proteins.

It localises to the mitochondrion. The polypeptide is Small ribosomal subunit protein uS7m (mrps7) (Danio rerio (Zebrafish)).